We begin with the raw amino-acid sequence, 60 residues long: Large ribosomal subunit protein bL32 (60 aa).

Residues 1 to 16 (MAVPRRKTSPSRRGMR) are compositionally biased toward basic residues. Positions 1–60 (MAVPRRKTSPSRRGMRRSADALKRPTYAEDKDSGELRRPHHLDLKTGMYKGRQVIKKKDA) are disordered. Over residues 17–44 (RSADALKRPTYAEDKDSGELRRPHHLDL) the composition is skewed to basic and acidic residues.

The protein belongs to the bacterial ribosomal protein bL32 family.

This chain is Large ribosomal subunit protein bL32, found in Rhodopseudomonas palustris (strain BisB5).